The following is a 271-amino-acid chain: Phosphate import ATP-binding protein PstB (271 aa).

Positions methionine 24–isoleucine 266 constitute an ABC transporter domain. Glycine 56–serine 63 contributes to the ATP binding site.

This sequence belongs to the ABC transporter superfamily. Phosphate importer (TC 3.A.1.7) family. The complex is composed of two ATP-binding proteins (PstB), two transmembrane proteins (PstC and PstA) and a solute-binding protein (PstS).

The protein localises to the cell inner membrane. The enzyme catalyses phosphate(out) + ATP + H2O = ADP + 2 phosphate(in) + H(+). Part of the ABC transporter complex PstSACB involved in phosphate import. Responsible for energy coupling to the transport system. This is Phosphate import ATP-binding protein PstB from Rhizobium etli (strain ATCC 51251 / DSM 11541 / JCM 21823 / NBRC 15573 / CFN 42).